The chain runs to 363 residues: UDP-3-O-acylglucosamine N-acyltransferase (363 aa).

The Proton acceptor role is filled by H252.

This sequence belongs to the transferase hexapeptide repeat family. LpxD subfamily. Homotrimer.

The catalysed reaction is a UDP-3-O-[(3R)-3-hydroxyacyl]-alpha-D-glucosamine + a (3R)-hydroxyacyl-[ACP] = a UDP-2-N,3-O-bis[(3R)-3-hydroxyacyl]-alpha-D-glucosamine + holo-[ACP] + H(+). Its pathway is bacterial outer membrane biogenesis; LPS lipid A biosynthesis. In terms of biological role, catalyzes the N-acylation of UDP-3-O-acylglucosamine using 3-hydroxyacyl-ACP as the acyl donor. Is involved in the biosynthesis of lipid A, a phosphorylated glycolipid that anchors the lipopolysaccharide to the outer membrane of the cell. This is UDP-3-O-acylglucosamine N-acyltransferase from Cupriavidus taiwanensis (strain DSM 17343 / BCRC 17206 / CCUG 44338 / CIP 107171 / LMG 19424 / R1) (Ralstonia taiwanensis (strain LMG 19424)).